The primary structure comprises 526 residues: Thymocyte selection-associated high mobility group box protein TOX (526 aa).

Disordered regions lie at residues 138-178 (MPDI…PHGQ) and 192-264 (GLNM…PQKP). The segment covering 192 to 203 (GLNMGGSNVPHN) has biased composition (polar residues). Residues 209–220 (GSKSATPSPSSS) show a composition bias toward low complexity. Over residues 228–245 (DTSKINGGEKRPASDMGK) the composition is skewed to basic and acidic residues. Residues 237 to 256 (KRPASDMGKKPKTPKKKKKK) carry the Nuclear localization signal motif. Residues 246-256 (KPKTPKKKKKK) show a composition bias toward basic residues. The segment at residues 261-329 (PQKPVSAYAL…EYLKQLAAYR (69 aa)) is a DNA-binding region (HMG box).

The protein belongs to the high motility group (HMG) box superfamily. In terms of assembly, interacts with HBO1 complex composed at least of KAT7/HBO1, ING4, MEAF6, and JADE2; this complex is involved in histone acetylation. Interacts with DNMT1, LEO1, PAF1, SAP130 and SIN3A; these interactors regulate chromatin remodeling. Interacts with an array of proteins involved in RNA processing and translation and DNA replication. As to expression, expressed in NK cells. Highly expressed in tumor-infiltrating CD8-positive T cells (at protein level).

The protein localises to the nucleus. Its function is as follows. Transcriptional regulator with a major role in neural stem cell commitment and corticogenesis as well as in lymphoid cell development and lymphoid tissue organogenesis. Binds to GC-rich DNA sequences in the proximity of transcription start sites and may alter chromatin structure, modifying access of transcription factors to DNA. During cortical development, controls the neural stem cell pool by inhibiting the switch from proliferative to differentiating progenitors. Beyond progenitor cells, promotes neurite outgrowth in newborn neurons migrating to reach the cortical plate. May activate or repress critical genes for neural stem cell fate such as SOX2, EOMES and ROBO2. Plays an essential role in the development of lymphoid tissue-inducer (LTi) cells, a subset necessary for the formation of secondary lymphoid organs: peripheral lymph nodes and Peyer's patches. Acts as a developmental checkpoint and regulates thymocyte positive selection toward T cell lineage commitment. Required for the development of various T cell subsets, including CD4-positive helper T cells, CD8-positive cytotoxic T cells, regulatory T cells and CD1D-dependent natural killer T (NKT) cells. Required for the differentiation of common lymphoid progenitors (CMP) to innate lymphoid cells (ILC). May regulate the NOTCH-mediated gene program, promoting differentiation of the ILC lineage. Required at the progenitor phase of NK cell development in the bone marrow to specify NK cell lineage commitment. Upon chronic antigen stimulation, diverts T cell development by promoting the generation of exhaustive T cells, while suppressing effector and memory T cell programming. May regulate the expression of genes encoding inhibitory receptors such as PDCD1 and induce the exhaustion program, to prevent the overstimulation of T cells and activation-induced cell death. This chain is Thymocyte selection-associated high mobility group box protein TOX, found in Homo sapiens (Human).